The primary structure comprises 262 residues: Phosphatidylglycerol--prolipoprotein diacylglyceryl transferase (262 aa).

Helical transmembrane passes span 9–29 (LGPL…ILAV), 41–61 (IIPD…ILGA), 80–100 (IFAI…GALV), and 109–129 (LINT…AQSL). An a 1,2-diacyl-sn-glycero-3-phospho-(1'-sn-glycerol)-binding site is contributed by R131. The next 3 membrane-spanning stretches (helical) occupy residues 167-187 (QPTF…ILIF), 197-217 (GHIT…IEGM), and 226-246 (GLRV…MIVI).

This sequence belongs to the Lgt family.

The protein resides in the cell membrane. It catalyses the reaction L-cysteinyl-[prolipoprotein] + a 1,2-diacyl-sn-glycero-3-phospho-(1'-sn-glycerol) = an S-1,2-diacyl-sn-glyceryl-L-cysteinyl-[prolipoprotein] + sn-glycerol 1-phosphate + H(+). It functions in the pathway protein modification; lipoprotein biosynthesis (diacylglyceryl transfer). In terms of biological role, catalyzes the transfer of the diacylglyceryl group from phosphatidylglycerol to the sulfhydryl group of the N-terminal cysteine of a prolipoprotein, the first step in the formation of mature lipoproteins. The protein is Phosphatidylglycerol--prolipoprotein diacylglyceryl transferase of Streptococcus pneumoniae (strain ATCC 700669 / Spain 23F-1).